A 443-amino-acid chain; its full sequence is MLSKTNQNIFTVSRLNAEVRLLLENEMGIVWLVGEISNFSAPVSGHWYLTLKDSRAQVKCAMFRGNNRRVTFKPANGNQVLVKARLSLYEPRGDYQLIIESMQPEGDGRLQQEFEELKMKLAAEGLFAQTNKLPLPEHPKRVGIITSKTGAALYDILDVLKRRDPSLPVVIYPTMVQGDDAAIQIAQAIGRANSRNECDVLIVGRGGGSLEDLWCFNNEILARTIAASQIPIISAVGHEVDMTIADFVADVRAPTPSAAAELVSRDNSHKDQSLVAKQHKLASAMRYYLSQQKQQSAQLLHRLERQHPSYQLQRQSQQLDELDMRLRRAMQRFIDTRQQAVERKHHRLQLNSPVKHLAQQKSRLERVEHKLLDTMDRKLLTMRHQLAIAAEKLDTVSPLATLKRGYSITQTEQGKVVTSADDVKTGDLLVTRLANGEIHSTVS.

The protein belongs to the XseA family. In terms of assembly, heterooligomer composed of large and small subunits.

The protein localises to the cytoplasm. The catalysed reaction is Exonucleolytic cleavage in either 5'- to 3'- or 3'- to 5'-direction to yield nucleoside 5'-phosphates.. Bidirectionally degrades single-stranded DNA into large acid-insoluble oligonucleotides, which are then degraded further into small acid-soluble oligonucleotides. This is Exodeoxyribonuclease 7 large subunit from Vibrio parahaemolyticus serotype O3:K6 (strain RIMD 2210633).